The following is a 254-amino-acid chain: Chalcone isomerase cfoK (254 aa).

Catalysis depends on residues H33 and Y50.

The enzyme catalyses a chalcone = a flavanone.. It functions in the pathway secondary metabolite biosynthesis; flavonoid biosynthesis. Chalcone isomerase; part of the gene cluster that mediates the biosynthesis of chlorflavonin, a fungal flavonoid with acetolactate synthase inhibitory activity. Within the pathway, cfoK acts as chalcone isomerase (CHI), the key enzyme responsible for the tricyclic formation of flavanone through Michael-type intramolecular cyclization of chalcone. The hydrogen at C2'-OH is extracted by the imidazole ring of His-33, which induces the oxa-Michael addition to form the intermediate enolate through 6-endo-trig mode cyclization. The enolate can then be stabilized by a hydrogen bond with the Tyr-50 residue. Following enol tautomerization, the C ring, a gamma-pyranone ring, is formed. The pathway begins with the PKS-NRPS hybrid synthetase cfoA that uses benzoic acid or p-hydroxybenzoic acid as a starter unit with four rounds of chain elongation using malonyl-CoA to form the chalcone skeleton. Then, a new type of chalcone isomerase, cfoK, catalyzes the conversion of the chalcone into a flavanone by a histidine-mediated oxa-Michael addition mechanism. The desaturation of flavanone to flavone is catalyzed by a new type of flavone synthase, the flavin mononucleotide (FMN)-dependent oxidoreductase cfoJ. Monooxygenases cfoF, cfoG, and P450 cfoH are responsible for the hydroxylation of the flavonoid skeleton at sites C3, C8, and C2', respectively. Like cfoF, the dehydratase cfoI plays also a role in the hydroxylation of position C3. Methyltransferases cfoB, cfoC, and cfoD then catalyze the methylation of C7-OH, C8-OH, and C3-OH, respectively. Finally, the monooxygenase cfoE is responsible for the chlorination of flavonoid at position C3'. The polypeptide is Chalcone isomerase cfoK (Aspergillus candidus).